The following is a 419-amino-acid chain: UDP-N-acetylglucosamine 1-carboxyvinyltransferase 2 (419 aa).

22 to 23 (KN) provides a ligand contact to phosphoenolpyruvate. UDP-N-acetyl-alpha-D-glucosamine is bound at residue Arg-92. The Proton donor role is filled by Cys-116. A 2-(S-cysteinyl)pyruvic acid O-phosphothioketal modification is found at Cys-116. UDP-N-acetyl-alpha-D-glucosamine contacts are provided by residues 121-125 (RPIDL), Asp-306, and Ile-328.

The protein belongs to the EPSP synthase family. MurA subfamily.

It is found in the cytoplasm. The catalysed reaction is phosphoenolpyruvate + UDP-N-acetyl-alpha-D-glucosamine = UDP-N-acetyl-3-O-(1-carboxyvinyl)-alpha-D-glucosamine + phosphate. It participates in cell wall biogenesis; peptidoglycan biosynthesis. Its function is as follows. Cell wall formation. Adds enolpyruvyl to UDP-N-acetylglucosamine. The sequence is that of UDP-N-acetylglucosamine 1-carboxyvinyltransferase 2 from Streptococcus pneumoniae (strain ATCC BAA-255 / R6).